The chain runs to 415 residues: Beta-2 adrenergic receptor (415 aa).

At 1–34 (MGQPANRSVFLLAPNGSHAPDQGDSQERSEAWVV) the chain is on the extracellular side. N-linked (GlcNAc...) asparagine glycans are attached at residues Asn6 and Asn15. A helical transmembrane segment spans residues 35–58 (GMGIVMSLIVLAIVFGNVLVITAI). The Cytoplasmic segment spans residues 59-71 (ARFERLQTVTNYF). Residues 72–95 (ITSLACADLVMGLAVVPFGASHIL) form a helical membrane-spanning segment. Residues 96 to 106 (MKMWTFGNFWC) lie on the Extracellular side of the membrane. 2 disulfides stabilise this stretch: Cys106–Cys191 and Cys184–Cys190. A helical membrane pass occupies residues 107–129 (EFWTSIDVLCVTASIETLCVIAV). The Cytoplasmic portion of the chain corresponds to 130–150 (DRYFAITSPFKYQSLLTKNKA). Tyr141 is subject to Phosphotyrosine. Residues 151 to 174 (RVVILMVWIVSGLTSFLPIQMHWY) traverse the membrane as a helical segment. Over 175–196 (RATHQEAINCYAKETCCDFFTN) the chain is Extracellular. The helical transmembrane segment at 197 to 220 (QAYAIASSIVSFYLPLVVMVFVYS) threads the bilayer. Over 221–274 (RVFQVAQRQLQKIDRSEGRFHAQNLSQVEQDGRSGHGHRRSSKFCLKEHKALKT) the chain is Cytoplasmic. The residue at position 246 (Ser246) is a Phosphoserine. Ser261 and Ser262 each carry phosphoserine; by PKA. The S-palmitoyl cysteine moiety is linked to residue Cys265. Residues 275-298 (LGIIMGTFTLCWLPFFIVNIVHVI) form a helical membrane-spanning segment. Residues 299–305 (QDNLIPK) lie on the Extracellular side of the membrane. Residues 306–329 (EVYILLNWVGYVNSAFNPLIYCRS) traverse the membrane as a helical segment. The Cytoplasmic segment spans residues 330-415 (PDFRIAFQEL…RNCSTNDSLL (86 aa)). The S-palmitoyl cysteine moiety is linked to residue Cys341. Ser345 and Ser346 each carry phosphoserine; by PKA. Ser355 carries the phosphoserine; by BARK modification. Residues 379–415 (SELLCEDPPGTEDRQGTVPSDSVDSQGRNCSTNDSLL) are disordered. A 4-hydroxyproline mark is found at Pro387 and Pro397. The segment covering 395-415 (TVPSDSVDSQGRNCSTNDSLL) has biased composition (polar residues). The short motif at 412–415 (DSLL) is the PDZ-binding element.

The protein belongs to the G-protein coupled receptor 1 family. Adrenergic receptor subfamily. ADRB2 sub-subfamily. As to quaternary structure, binds NHERF1 and GPRASP1. Interacts with ARRB1 and ARRB2. Interacts with SRC. Interacts with USP20 and USP33. Interacts with VHL; the interaction, which is increased on hydroxylation of ADRB2, ubiquitinates ADRB2 leading to its degradation. Interacts with EGLN3; the interaction hydroxylates ADRB2 facilitating VHL-E3 ligase-mediated ubiquitination. Interacts (via PDZ-binding motif) with SNX27 (via PDZ domain); the interaction is required when endocytosed to prevent degradation in lysosomes and promote recycling to the plasma membrane. Interacts with CNIH4. Interacts with ARRDC3. Interacts with NEDD4. Interacts with MARCHF2. In terms of processing, palmitoylated; may reduce accessibility of Ser-345 and Ser-346 by anchoring Cys-341 to the plasma membrane. Agonist stimulation promotes depalmitoylation and further allows Ser-345 and Ser-346 phosphorylation. Post-translationally, phosphorylated by PKA and BARK upon agonist stimulation, which mediates homologous desensitization of the receptor. PKA-mediated phosphorylation seems to facilitate phosphorylation by BARK. Phosphorylation of Tyr-141 is induced by insulin and leads to supersensitization of the receptor. In terms of processing, polyubiquitinated. Agonist-induced ubiquitination leads to sort internalized receptors to the lysosomes for degradation. Deubiquitination by USP20 and USP33, leads to ADRB2 recycling and resensitization after prolonged agonist stimulation. USP20 and USP33 are constitutively associated and are dissociated immediately after agonist stimulation. Ubiquitination by the VHL-E3 ligase complex is oxygen-dependent. Post-translationally, hydroxylation by EGLN3 occurs only under normoxia and increases the interaction with VHL and the subsequent ubiquitination and degradation of ADRB2. Palmitoylated. Mainly palmitoylated at Cys-341. Palmitoylation may reduce accessibility of phosphorylation sites by anchoring the receptor to the plasma membrane. Agonist stimulation promotes depalmitoylation and further allows Ser-345 and Ser-346 phosphorylation. Also undergoes transient, ligand-induced palmitoylation at Cys-265 probably by ZDHHC9, ZDHHC14 and ZDHHC18 within the Golgi. Palmitoylation at Cys-265 requires phosphorylation by PKA and receptor internalization and stabilizes the receptor. Could be depalmitoylated by LYPLA1 at the plasma membrane.

It localises to the cell membrane. The protein resides in the early endosome. The protein localises to the golgi apparatus. Beta-adrenergic receptors mediate the catecholamine-induced activation of adenylate cyclase through the action of G proteins. The beta-2-adrenergic receptor binds epinephrine with an approximately 30-fold greater affinity than it does norepinephrine. In Canis lupus familiaris (Dog), this protein is Beta-2 adrenergic receptor (ADRB2).